Consider the following 238-residue polypeptide: D/L-lactic acid transporter (238 aa).

The next 2 membrane-spanning stretches (helical) occupy residues 2 to 22 and 39 to 59; these read VHQLIAEFMGTALMIIFGVGV and IFAITTWGFGISVALFIFGNV. The NPA 1 signature appears at 62 to 64; sequence NPA. A run of 3 helical transmembrane segments spans residues 80–100, 135–155, and 158–178; these read FIPYSVAEVLGGVVGSVIVWI, FFVELFDTFIFISGILAISEI, and PGIVPIGVGLLVWAIGMGLGG. Residues 185–187 carry the NPA 2 motif; that stretch reads NLA. The chain crosses the membrane as a helical span at residues 211–231; it reads YGIIVPGIAPFVGAAIAAWFM.

The protein belongs to the MIP/aquaporin (TC 1.A.8) family.

The protein localises to the cell membrane. Transporter that facilitates the transmembrane diffusion of D/L-lactic acid. Is involved in the cellular racemization of lactate and lactate metabolism. The transported molecule is indeed lactic acid and not the lactate anion, in agreement with the assumption that, with very few exceptions, MIPs (major intrinsic proteins) only facilitate the transport of uncharged solutes. Also facilitates urea and H(2)O(2) diffusion across membranes, but is not permeable to water, glycerol and dihydroxyacetone. In Lactiplantibacillus plantarum (strain ATCC BAA-793 / NCIMB 8826 / WCFS1) (Lactobacillus plantarum), this protein is D/L-lactic acid transporter.